The chain runs to 312 residues: Malate dehydrogenase (312 aa).

NAD(+) contacts are provided by residues 7–13 (GAAGGIG) and Asp-34. Substrate contacts are provided by Arg-81 and Arg-87. NAD(+) contacts are provided by residues Asn-94 and 117–119 (ITN). Residues Asn-119 and Arg-153 each contribute to the substrate site. The active-site Proton acceptor is His-177. NAD(+) is bound at residue Met-227.

The protein belongs to the LDH/MDH superfamily. MDH type 1 family. Homodimer.

It catalyses the reaction (S)-malate + NAD(+) = oxaloacetate + NADH + H(+). Functionally, catalyzes the reversible oxidation of malate to oxaloacetate. This chain is Malate dehydrogenase, found in Salmonella gallinarum (strain 287/91 / NCTC 13346).